The primary structure comprises 526 residues: Type 2 glycosyltransferase (526 aa).

Residues 25–45 form a helical membrane-spanning segment; that stretch reads PSFDFWYSSTFWLYLFLGLWF. N-linked (GlcNAc...) asparagine glycosylation is found at N298 and N317. Helical transmembrane passes span 340 to 360, 375 to 395, and 403 to 423; these read FATF…SCWW, WSQF…GLFI, and FLPV…YALI. N426 and N517 each carry an N-linked (GlcNAc...) asparagine glycan.

Belongs to the GT2 glycosyltransferase family.

Its subcellular location is the cell membrane. The protein resides in the secreted. It localises to the cell wall. Functionally, glycosyltransferase involved in the maintenance of the outermost surface of the fungal cell wall. Likely functions in the synthesis of a currently unknown, potentially minor but widespread, extracellular or outer cell wall polysaccharide which plays a key role in facilitating many interactions between plants and fungi by enabling hyphal growth on solid matrices. This chain is Type 2 glycosyltransferase, found in Gibberella zeae (strain ATCC MYA-4620 / CBS 123657 / FGSC 9075 / NRRL 31084 / PH-1) (Wheat head blight fungus).